The chain runs to 594 residues: Spindle pole body-associated protein CIK1 (594 aa).

The segment at 1-29 (MNNSKIPKLSFHSDPNNVTRDFPKTKRQK) is disordered. The stretch at 81–360 (IERVKNNERK…VNELEKVQQE (280 aa)) forms a coiled coil.

Interacts with KAR3; the interaction is direct.

The protein resides in the nucleus. It localises to the cytoplasm. Its subcellular location is the cytoskeleton. The protein localises to the microtubule organizing center. It is found in the spindle pole body. The protein resides in the spindle. In terms of biological role, together with the minus end-directed microtubule motor KAR3, involved in spindle midzone assembly, karyogamy (nuclear fusion) during mating, and with an essential function in meiosis I. To contribute to spindle midzone assembly during mitotic metaphase, the KAR3-CIK1 motor cross-links anti-parallel microtubules to align them on the spindle axis; as the motor travels polewards splayed microtubules are pulled into alignment. During the karyogamy (nuclear fusion) step of mating, KAR3-CIK1 cross-links antiparallel cytoplasmic microtubules emanating from the spindle pole bodies of mating partners; the motor activity of KAR3 creates the force that pulls the nuclei together by sliding cross-linked microtubules past one another. KAR3-CIK1 promotes microtubule shortening predominantly from the microtubule plus-end. Required for interhomolog recombination, synapsis of homologous chromosomes and establishment of a meiosis I spindle. The polypeptide is Spindle pole body-associated protein CIK1 (CIK1) (Saccharomyces cerevisiae (strain ATCC 204508 / S288c) (Baker's yeast)).